Consider the following 427-residue polypeptide: Enolase (427 aa).

Gln-163 contacts (2R)-2-phosphoglycerate. The Proton donor role is filled by Glu-205. The Mg(2+) site is built by Asp-242, Glu-285, and Asp-312. (2R)-2-phosphoglycerate-binding residues include Lys-337, Arg-366, Ser-367, and Lys-388. Residue Lys-337 is the Proton acceptor of the active site.

Belongs to the enolase family. It depends on Mg(2+) as a cofactor.

It is found in the cytoplasm. Its subcellular location is the secreted. The protein resides in the cell surface. It carries out the reaction (2R)-2-phosphoglycerate = phosphoenolpyruvate + H2O. The protein operates within carbohydrate degradation; glycolysis; pyruvate from D-glyceraldehyde 3-phosphate: step 4/5. Catalyzes the reversible conversion of 2-phosphoglycerate (2-PG) into phosphoenolpyruvate (PEP). It is essential for the degradation of carbohydrates via glycolysis. This is Enolase from Rhodopseudomonas palustris (strain ATCC BAA-98 / CGA009).